We begin with the raw amino-acid sequence, 294 residues long: Nucleotide-binding protein Tfu_2020 (294 aa).

Residue 18–25 (GMSGAGRS) participates in ATP binding. 69 to 72 (DVRS) serves as a coordination point for GTP.

Belongs to the RapZ-like family.

Displays ATPase and GTPase activities. This Thermobifida fusca (strain YX) protein is Nucleotide-binding protein Tfu_2020.